Here is a 477-residue protein sequence, read N- to C-terminus: Alanine--glyoxylate aminotransferase 2 homolog 2, mitochondrial (477 aa).

The N-terminal 22 residues, 1 to 22 (MQRFAAKRSVQNISVSLWRRCI), are a transit peptide targeting the mitochondrion. Residues 165–166 (GT), Tyr-192, and 292–295 (DEVQ) each bind pyridoxal 5'-phosphate. At Lys-321 the chain carries N6-(pyridoxal phosphate)lysine. Residue Thr-350 participates in pyridoxal 5'-phosphate binding.

This sequence belongs to the class-III pyridoxal-phosphate-dependent aminotransferase family. In terms of assembly, homotetramer. Interacts with GRF3. The cofactor is pyridoxal 5'-phosphate.

It localises to the mitochondrion. The enzyme catalyses glyoxylate + L-alanine = glycine + pyruvate. The sequence is that of Alanine--glyoxylate aminotransferase 2 homolog 2, mitochondrial (AGT3) from Arabidopsis thaliana (Mouse-ear cress).